The primary structure comprises 186 residues: Probable chorismate pyruvate-lyase (186 aa).

Residues Arg78, Leu116, and Glu175 each coordinate substrate.

Belongs to the UbiC family.

It localises to the cytoplasm. It catalyses the reaction chorismate = 4-hydroxybenzoate + pyruvate. Its pathway is cofactor biosynthesis; ubiquinone biosynthesis. Its function is as follows. Removes the pyruvyl group from chorismate, with concomitant aromatization of the ring, to provide 4-hydroxybenzoate (4HB) for the ubiquinone pathway. The polypeptide is Probable chorismate pyruvate-lyase (Psychromonas ingrahamii (strain DSM 17664 / CCUG 51855 / 37)).